The following is a 533-amino-acid chain: Light-independent protochlorophyllide reductase subunit B (533 aa).

Aspartate 36 provides a ligand contact to [4Fe-4S] cluster. Aspartate 292 (proton donor) is an active-site residue. Residue 428–429 participates in substrate binding; sequence GL.

Belongs to the ChlB/BchB/BchZ family. As to quaternary structure, protochlorophyllide reductase is composed of three subunits; BchL, BchN and BchB. Forms a heterotetramer of two BchB and two BchN subunits. [4Fe-4S] cluster is required as a cofactor.

The enzyme catalyses chlorophyllide a + oxidized 2[4Fe-4S]-[ferredoxin] + 2 ADP + 2 phosphate = protochlorophyllide a + reduced 2[4Fe-4S]-[ferredoxin] + 2 ATP + 2 H2O. It participates in porphyrin-containing compound metabolism; bacteriochlorophyll biosynthesis (light-independent). In terms of biological role, component of the dark-operative protochlorophyllide reductase (DPOR) that uses Mg-ATP and reduced ferredoxin to reduce ring D of protochlorophyllide (Pchlide) to form chlorophyllide a (Chlide). This reaction is light-independent. The NB-protein (BchN-BchB) is the catalytic component of the complex. The sequence is that of Light-independent protochlorophyllide reductase subunit B from Prosthecochloris aestuarii (strain DSM 271 / SK 413).